Here is a 123-residue protein sequence, read N- to C-terminus: UPF0382 membrane protein YwdK (123 aa).

A run of 4 helical transmembrane segments spans residues 3–23 (VFII…AFGA), 49–69 (ALGL…GSVT), 71–91 (AGWL…ILSV), and 96–116 (ILGA…IMIV).

Belongs to the UPF0382 family.

Its subcellular location is the cell membrane. The chain is UPF0382 membrane protein YwdK (ywdK) from Bacillus subtilis (strain 168).